A 445-amino-acid polypeptide reads, in one-letter code: Sporulation-specific glucan 1,3-beta-glucosidase (445 aa).

An N-terminal signal peptide occupies residues 1–21 (MVSFRGLTTLTLLFTKLVNCN). Residue N201 is glycosylated (N-linked (GlcNAc...) asparagine). Catalysis depends on E233, which acts as the Proton donor. E335 acts as the Nucleophile in catalysis.

It belongs to the glycosyl hydrolase 5 (cellulase A) family.

Its subcellular location is the secreted. It carries out the reaction Successive hydrolysis of beta-D-glucose units from the non-reducing ends of (1-&gt;3)-beta-D-glucans, releasing alpha-glucose.. Probably involved in the processes of spore formation and contributes to ascospore thermoresistance by participating in the morphogenesis of ascospore walls. The enzyme may do this by modifying glucan linkages in the developing ascospore wall, thus strengthening it or lending it plasticity. The sequence is that of Sporulation-specific glucan 1,3-beta-glucosidase (SPR1) from Saccharomyces cerevisiae (strain ATCC 204508 / S288c) (Baker's yeast).